We begin with the raw amino-acid sequence, 320 residues long: Malate dehydrogenase (320 aa).

Residues glycine 10 to glycine 15 and aspartate 34 each bind NAD(+). Arginine 83 and arginine 89 together coordinate substrate. Residues asparagine 96 and isoleucine 119–asparagine 121 contribute to the NAD(+) site. Residues asparagine 121 and arginine 152 each contribute to the substrate site. The active-site Proton acceptor is histidine 176.

Belongs to the LDH/MDH superfamily. MDH type 3 family.

The catalysed reaction is (S)-malate + NAD(+) = oxaloacetate + NADH + H(+). Functionally, catalyzes the reversible oxidation of malate to oxaloacetate. This Rhizobium etli (strain CIAT 652) protein is Malate dehydrogenase.